An 884-amino-acid chain; its full sequence is Telomerase reverse transcriptase (884 aa).

The region spanning 422–725 (CRNHNSYTLS…TVIQFCAMHI (304 aa)) is the Reverse transcriptase domain. The Mg(2+) site is built by Asp530, Asp670, and Asp671.

This sequence belongs to the reverse transcriptase family. Telomerase subfamily. In terms of assembly, catalytic subunit of the telomerase holoenzyme complex composed minimally of EST2 and the telomerase RNA template component.

The protein localises to the nucleus. It is found in the chromosome. Its subcellular location is the telomere. It catalyses the reaction DNA(n) + a 2'-deoxyribonucleoside 5'-triphosphate = DNA(n+1) + diphosphate. In terms of biological role, telomerase is a ribonucleoprotein enzyme essential for the replication of chromosome termini in most eukaryotes. It elongates telomeres. It is a reverse transcriptase that adds simple sequence repeats to chromosome ends by copying a template sequence within the RNA component of the enzyme. This Saccharomyces cerevisiae (strain ATCC 204508 / S288c) (Baker's yeast) protein is Telomerase reverse transcriptase (EST2).